Consider the following 786-residue polypeptide: ATP-dependent RNA helicase SUPV3L1, mitochondrial (786 aa).

The transit peptide at 1–22 (MSFSRALLWARLPAGRQAGHRA) directs the protein to the mitochondrion. N6-acetyllysine is present on Lys-99. The Helicase ATP-binding domain occupies 194–334 (DARAMQRKII…AIDLVMELMY (141 aa)). 207–214 (GPTNSGKT) is a binding site for ATP. Lys-220 carries the post-translational modification N6-acetyllysine. The region spanning 353–518 (VLDHALESLD…GLHPTAEQIE (166 aa)) is the Helicase C-terminal domain. The interval 650 to 786 (PDASLIRDLQ…RRKKKEPDSD (137 aa)) is interaction with LAMTOR5, important for protein stability. 2 disordered regions span residues 690-730 (GFPS…DAGE) and 749-786 (KQLE…PDSD). Positions 693 to 705 (SGSQSRLSGTLKS) are enriched in polar residues. Ser-725 bears the Phosphoserine mark. Over residues 749 to 771 (KQLEKEWMTQQTEHNKEKTESGT) the composition is skewed to basic and acidic residues.

Belongs to the helicase family. As to quaternary structure, homodimer; in free form. Component of the mitochondrial degradosome (mtEXO) complex which is a heteropentamer containing 2 copies of SUPV3L1 and 3 copies of PNPT1. As part of mitochondrial degradosome complex, interacts with GRSF1 in a RNA-dependent manner; the interaction enhances the activity of the complex. Interacts with LAMTOR5/HBXIP, WRN and BLM. Mg(2+) serves as cofactor. The cofactor is Mn(2+). As to expression, broadly expressed.

It localises to the nucleus. The protein resides in the mitochondrion matrix. It is found in the mitochondrion nucleoid. The enzyme catalyses ATP + H2O = ADP + phosphate + H(+). Helicase activity toward DNA substrate is inhibited by micromolar concentrations of 5,6-dichloro-1-(beta-D-ribofuranosyl)benzotriazole (DRBT) and 4,5,6,7-tetrabromobenzotriazole (TBBT). Helicase activity toward RNA substrate is inhibited by elevated concentrations of TBBT. Inhibited by some ring-expanded nucleoside analogs. Major helicase player in mitochondrial RNA metabolism. Component of the mitochondrial degradosome (mtEXO) complex, that degrades 3' overhang double-stranded RNA with a 3'-to-5' directionality in an ATP-dependent manner. Involved in the degradation of non-coding mitochondrial transcripts (MT-ncRNA) and tRNA-like molecules. ATPase and ATP-dependent multisubstrate helicase, able to unwind double-stranded (ds) DNA and RNA, and RNA/DNA heteroduplexes in the 5'-to-3' direction. Plays a role in the RNA surveillance system in mitochondria; regulates the stability of mature mRNAs, the removal of aberrantly formed mRNAs and the rapid degradation of non coding processing intermediates. Also implicated in recombination and chromatin maintenance pathways. May protect cells from apoptosis. Associates with mitochondrial DNA. The sequence is that of ATP-dependent RNA helicase SUPV3L1, mitochondrial (SUPV3L1) from Homo sapiens (Human).